Reading from the N-terminus, the 428-residue chain is 3-phosphoshikimate 1-carboxyvinyltransferase (428 aa).

3-phosphoshikimate-binding residues include Lys-23, Ser-24, and Arg-28. Lys-23 contacts phosphoenolpyruvate. Residues Gly-97 and Arg-125 each contribute to the phosphoenolpyruvate site. Positions 170, 171, 172, 198, 314, 337, and 341 each coordinate 3-phosphoshikimate. Gln-172 contributes to the phosphoenolpyruvate binding site. The active-site Proton acceptor is the Asp-314. Arg-345, Arg-387, and Lys-412 together coordinate phosphoenolpyruvate.

This sequence belongs to the EPSP synthase family. Monomer.

Its subcellular location is the cytoplasm. The catalysed reaction is 3-phosphoshikimate + phosphoenolpyruvate = 5-O-(1-carboxyvinyl)-3-phosphoshikimate + phosphate. Its pathway is metabolic intermediate biosynthesis; chorismate biosynthesis; chorismate from D-erythrose 4-phosphate and phosphoenolpyruvate: step 6/7. Functionally, catalyzes the transfer of the enolpyruvyl moiety of phosphoenolpyruvate (PEP) to the 5-hydroxyl of shikimate-3-phosphate (S3P) to produce enolpyruvyl shikimate-3-phosphate and inorganic phosphate. The sequence is that of 3-phosphoshikimate 1-carboxyvinyltransferase from Edwardsiella ictaluri (strain 93-146).